The sequence spans 249 residues: General transcription factor IIF subunit 2 (249 aa).

Ala2 is modified (N-acetylalanine). N6-acetyllysine occurs at positions 22, 33, and 137. The residue at position 142 (Ser142) is a Phosphoserine. DNA contacts are provided by Gly227 and His229. Ser248 is subject to Phosphoserine.

Belongs to the TFIIF beta subunit family. As to quaternary structure, heterodimer of an alpha and a beta subunit. Interacts with HTATSF1 and GPBP1. Interacts with URI1. Interacts with GTF2B (via N-terminus); this interaction is inhibited in presence of GTF2F1. Part of TBP-based Pol II pre-initiation complex (PIC), in which Pol II core assembles with general transcription factors and other specific initiation factors including GTF2E1, GTF2E2, GTF2F1, GTF2F2, TCEA1, ERCC2, ERCC3, GTF2H2, GTF2H3, GTF2H4, GTF2H5, GTF2A1, GTF2A2, GTF2B and TBP; this large multi-subunit PIC complex mediates DNA unwinding and targets Pol II core to the transcription start site where the first phosphodiester bond forms.

It localises to the nucleus. Functionally, TFIIF is a general transcription initiation factor that binds to RNA polymerase II and helps to recruit it to the initiation complex in collaboration with TFIIB. It promotes transcription elongation. This Rattus norvegicus (Rat) protein is General transcription factor IIF subunit 2 (Gtf2f2).